Reading from the N-terminus, the 504-residue chain is Cytochrome P450 6B7 (504 aa).

Residue C445 coordinates heme.

The protein belongs to the cytochrome P450 family. Heme is required as a cofactor.

Its subcellular location is the endoplasmic reticulum membrane. It localises to the microsome membrane. The catalysed reaction is an organic molecule + reduced [NADPH--hemoprotein reductase] + O2 = an alcohol + oxidized [NADPH--hemoprotein reductase] + H2O + H(+). The sequence is that of Cytochrome P450 6B7 (CYP6B7) from Helicoverpa armigera (Cotton bollworm).